Reading from the N-terminus, the 347-residue chain is MKPAILITITSTVVLGTMIVLFSSHWFMIWVGFEMNMLAIIPILMKKYNPRAMEASTKYFLTQATASMLLMLSIIINLLCSGHWTVSTIPNPVASTMITIALTMKLGLSPFHFWVPEVTQGISLSSGMILLTWQKIAPLSILYQISPSVNSNLLLMMAITSMLVGGWGGLNQTQLRKILAYSSITHMGWMAAIMVYNPTLAILNLTIYIMMTLGTFMLFMHSSSTTTLSLSYTWNKFPLMAPLILMLMLSLGGLPPLSGFIPKWMIIQELTKNDMIIMPTLMAITALLNLYFYTRLTYTTALTMFPATNNMKMKWQFETTKKTTLLAPLIVTSTMLLPLTPMLAALD.

11 consecutive transmembrane segments (helical) span residues 5 to 22 (ILITITSTVVLGTMIVLF), 26 to 45 (WFMIWVGFEMNMLAIIPILM), 60 to 80 (FLTQATASMLLMLSIIINLLC), 96 to 116 (TMITIALTMKLGLSPFHFWVP), 122 to 142 (ISLSSGMILLTWQKIAPLSIL), 153 to 173 (LLLMMAITSMLVGGWGGLNQT), 178 to 198 (ILAYSSITHMGWMAAIMVYNP), 200 to 220 (LAILNLTIYIMMTLGTFMLFM), 237 to 257 (FPLMAPLILMLMLSLGGLPPL), 274 to 294 (DMIIMPTLMAITALLNLYFYT), and 325 to 345 (LLAPLIVTSTMLLPLTPMLAA).

The protein belongs to the complex I subunit 2 family. Core subunit of respiratory chain NADH dehydrogenase (Complex I) which is composed of 45 different subunits. Interacts with TMEM242.

The protein resides in the mitochondrion inner membrane. The enzyme catalyses a ubiquinone + NADH + 5 H(+)(in) = a ubiquinol + NAD(+) + 4 H(+)(out). In terms of biological role, core subunit of the mitochondrial membrane respiratory chain NADH dehydrogenase (Complex I) which catalyzes electron transfer from NADH through the respiratory chain, using ubiquinone as an electron acceptor. Essential for the catalytic activity and assembly of complex I. The protein is NADH-ubiquinone oxidoreductase chain 2 of Ailuropoda melanoleuca (Giant panda).